A 348-amino-acid polypeptide reads, in one-letter code: Dihydroorotase (348 aa).

Residues His17 and His19 each contribute to the Zn(2+) site. Substrate is bound by residues 19 to 21 (HLR) and Asn45. Positions 103, 140, and 178 each coordinate Zn(2+). N6-carboxylysine is present on Lys103. Residue His140 coordinates substrate. Residue Leu223 coordinates substrate. Asp251 contacts Zn(2+). The active site involves Asp251. The substrate site is built by His255 and Ala267.

Belongs to the metallo-dependent hydrolases superfamily. DHOase family. Class II DHOase subfamily. Homodimer. Requires Zn(2+) as cofactor.

The catalysed reaction is (S)-dihydroorotate + H2O = N-carbamoyl-L-aspartate + H(+). The protein operates within pyrimidine metabolism; UMP biosynthesis via de novo pathway; (S)-dihydroorotate from bicarbonate: step 3/3. In terms of biological role, catalyzes the reversible cyclization of carbamoyl aspartate to dihydroorotate. In Shigella dysenteriae serotype 1 (strain Sd197), this protein is Dihydroorotase.